We begin with the raw amino-acid sequence, 300 residues long: Porphobilinogen deaminase (300 aa).

Cys-239 bears the S-(dipyrrolylmethanemethyl)cysteine mark.

The protein belongs to the HMBS family. In terms of assembly, monomer. It depends on dipyrromethane as a cofactor.

It carries out the reaction 4 porphobilinogen + H2O = hydroxymethylbilane + 4 NH4(+). The protein operates within porphyrin-containing compound metabolism; protoporphyrin-IX biosynthesis; coproporphyrinogen-III from 5-aminolevulinate: step 2/4. Tetrapolymerization of the monopyrrole PBG into the hydroxymethylbilane pre-uroporphyrinogen in several discrete steps. This Francisella tularensis subsp. holarctica (strain OSU18) protein is Porphobilinogen deaminase.